The chain runs to 318 residues: Protein W (318 aa).

Disordered regions lie at residues M1–E23 and S38–A318. Positions I7–G20 are enriched in basic and acidic residues. A compositionally biased stretch (polar residues) spans L50–G59. Phosphoserine; by host is present on S68. Residues R83–A101 show a composition bias toward basic and acidic residues. S125 is modified (phosphoserine; by host). The segment covering G150–D168 has biased composition (basic and acidic residues). Positions A191–A206 are enriched in polar residues. A phosphoserine; by host mark is found at S192, S249, S257, and S260.

This is Protein W (P/V/C) from Sendai virus (strain Harris) (SeV).